A 335-amino-acid chain; its full sequence is Biotin synthase (335 aa).

Positions 39-267 (TKIQVCKLIS…ASDVRLSAGR (229 aa)) constitute a Radical SAM core domain. [4Fe-4S] cluster is bound by residues Cys-54, Cys-58, and Cys-61. Cys-98, Cys-130, Cys-190, and Arg-262 together coordinate [2Fe-2S] cluster.

Belongs to the radical SAM superfamily. Biotin synthase family. Homodimer. [4Fe-4S] cluster serves as cofactor. [2Fe-2S] cluster is required as a cofactor.

It catalyses the reaction (4R,5S)-dethiobiotin + (sulfur carrier)-SH + 2 reduced [2Fe-2S]-[ferredoxin] + 2 S-adenosyl-L-methionine = (sulfur carrier)-H + biotin + 2 5'-deoxyadenosine + 2 L-methionine + 2 oxidized [2Fe-2S]-[ferredoxin]. Its pathway is cofactor biosynthesis; biotin biosynthesis; biotin from 7,8-diaminononanoate: step 2/2. In terms of biological role, catalyzes the conversion of dethiobiotin (DTB) to biotin by the insertion of a sulfur atom into dethiobiotin via a radical-based mechanism. This Nostoc punctiforme (strain ATCC 29133 / PCC 73102) protein is Biotin synthase.